Here is an 873-residue protein sequence, read N- to C-terminus: Protein translocase subunit SecA (873 aa).

Residues Gln-85, 103–107 (GEGKT), and Asp-492 contribute to the ATP site. Residues 835–856 (RYAEEEGKQPIRKENQIGRNDD) are compositionally biased toward basic and acidic residues. A disordered region spans residues 835-873 (RYAEEEGKQPIRKENQIGRNDDCPCGSGKKYKKCCGKNA). Zn(2+) is bound by residues Cys-857, Cys-859, Cys-868, and Cys-869. Basic residues predominate over residues 863-873 (KKYKKCCGKNA).

Belongs to the SecA family. As to quaternary structure, monomer and homodimer. Part of the essential Sec protein translocation apparatus which comprises SecA, SecYEG and auxiliary proteins SecDF. Other proteins may also be involved. Zn(2+) is required as a cofactor.

The protein resides in the cell membrane. It is found in the cytoplasm. It catalyses the reaction ATP + H2O + cellular proteinSide 1 = ADP + phosphate + cellular proteinSide 2.. In terms of biological role, part of the Sec protein translocase complex. Interacts with the SecYEG preprotein conducting channel. Has a central role in coupling the hydrolysis of ATP to the transfer of proteins into and across the cell membrane, serving as an ATP-driven molecular motor driving the stepwise translocation of polypeptide chains across the membrane. This Desulforamulus reducens (strain ATCC BAA-1160 / DSM 100696 / MI-1) (Desulfotomaculum reducens) protein is Protein translocase subunit SecA.